The primary structure comprises 294 residues: 2,4-diacetylphloroglucinol hydrolase (294 aa).

H129, E160, H270, and E274 together coordinate Zn(2+).

Belongs to the DAPG/phloretin hydrolase family. As to quaternary structure, homodimer. The cofactor is Zn(2+).

The catalysed reaction is 2,4-diacetylphloroglucinol + H2O = 2-acetylphloroglucinol + acetate. Specifically and significantly activated by CoCl(2). Competitively inhibited by MAPG, but not by 2-hydroxy- and 4-hydroxyacetophenone. Functionally, hydrolase that specifically degrades the potent antimicrobial compound 2,4-diacetylphloroglucinol (DAPG) to equimolar amounts of mildly toxic monoacetylphloroglucinol (MAPG) and acetate. The protein is 2,4-diacetylphloroglucinol hydrolase of Pseudomonas sp.